Here is a 592-residue protein sequence, read N- to C-terminus: Delta-like protein 3 (592 aa).

An N-terminal signal peptide occupies residues 1 to 32; the sequence is MVSLQVSPLSQTLILAFLLPQALPAGVFELQI. Over 33–490 the chain is Extracellular; that stretch reads HSFGPGPGLG…LRQADPQRFL (458 aa). The DSL domain maps to 174–213; that stretch reads ARCEPPAVGAACARLCRSRSAPSRCGPGLRPCTPFPDECE. EGF-like domains are found at residues 214–247, 272–308, 310–349, 351–387, 389–425, and 427–463; these read APSV…PLCT, GPGP…LRCE, SGVT…SNCE, RVDR…PRCE, DLDD…RDCR, and RADP…VRCE. 18 disulfide bridges follow: cysteine 218–cysteine 229, cysteine 222–cysteine 235, cysteine 237–cysteine 246, cysteine 276–cysteine 287, cysteine 281–cysteine 296, cysteine 298–cysteine 307, cysteine 314–cysteine 325, cysteine 319–cysteine 337, cysteine 339–cysteine 348, cysteine 355–cysteine 366, cysteine 360–cysteine 375, cysteine 377–cysteine 386, cysteine 393–cysteine 404, cysteine 398–cysteine 413, cysteine 415–cysteine 424, cysteine 431–cysteine 442, cysteine 436–cysteine 451, and cysteine 453–cysteine 462. The chain crosses the membrane as a helical span at residues 491 to 511; it reads LPPALGLLVAAGLAGAALLVI. Residues 512–592 are Cytoplasmic-facing; sequence HVRRRGPGQD…REDWLIQVLF (81 aa). A disordered region spans residues 548 to 567; sequence QDGAGDGPSSSADWNHPEDG.

Can bind and activate Notch-1 or another Notch receptor. Post-translationally, ubiquitinated by MIB (MIB1 or MIB2), leading to its endocytosis and subsequent degradation. Predominantly expressed in the neuroectoderm and paraxial mesoderm during embryogenesis.

It is found in the membrane. Functionally, inhibits primary neurogenesis. May be required to divert neurons along a specific differentiation pathway. Plays a role in the formation of somite boundaries during segmentation of the paraxial mesoderm. In Mus musculus (Mouse), this protein is Delta-like protein 3 (Dll3).